A 203-amino-acid polypeptide reads, in one-letter code: Transmembrane emp24 domain-containing protein (203 aa).

The N-terminal stretch at 1-22 is a signal peptide; sequence MASIRLLPSCIVLMFLARSSLC. Over 23 to 170 the chain is Lumenal; the sequence is YFITIDAHGE…RSINDNTNSR (148 aa). A GOLD domain is found at 32 to 114; sequence EECFHDKVTS…PKVLKFSMDI (83 aa). The helical transmembrane segment at 171–191 threads the bilayer; that stretch reads VVWWSFFESLVLVAMTLGQVY. Residues 192-203 are Cytoplasmic-facing; sequence YLKRFFEVRRVV.

It belongs to the EMP24/GP25L family.

The protein resides in the cytoplasmic vesicle membrane. Could have a role in the budding of coatomer-coated and other species of coated vesicles. This chain is Transmembrane emp24 domain-containing protein, found in Nematostella vectensis (Starlet sea anemone).